Consider the following 1132-residue polypeptide: Phosphatidylinositide phosphatase SAC2 (1132 aa).

The SAC domain maps to 167-518; the sequence is LKMFMDSESF…GDSISRQYAG (352 aa). In terms of domain architecture, hSac2 spans 593–760; the sequence is RSHQELISQL…KSSKPHEDII (168 aa). S827 and S830 each carry phosphoserine. Positions 846–875 are disordered; it reads ESDGDMSSDNDSYHSDEFLTNSKSDEDRQL. The span at 856–874 shows a compositional bias: basic and acidic residues; that stretch reads DSYHSDEFLTNSKSDEDRQ. Phosphoserine is present on residues S878, S881, S907, and S910. Disordered stretches follow at residues 923–942 and 974–1017; these read VAHG…KSPS and LSET…LDVS. The residue at position 1103 (S1103) is a Phosphoserine.

In terms of assembly, homodimer. Interacts with OCRL and RAB5A. Interacts with INPP5B and INPP4A. Interacts with STAT3; the interaction is independent of STAT3 'Tyr-705' phosphorylation status. In terms of tissue distribution, ubiquitous. Highly expressed in brain.

The protein resides in the membrane. Its subcellular location is the clathrin-coated pit. It localises to the early endosome. The protein localises to the recycling endosome. It carries out the reaction a myo-inositol phosphate + H2O = myo-inositol + phosphate. Inositol 4-phosphatase which mainly acts on phosphatidylinositol 4-phosphate. May be functionally linked to OCRL, which converts phosphatidylinositol 4,5-bisphosphate to phosphatidylinositol, for a sequential dephosphorylation of phosphatidylinositol 4,5-bisphosphate at the 5 and 4 position of inositol, thus playing an important role in the endocytic recycling. Regulator of TF:TFRC and integrins recycling pathway, is also involved in cell migration mechanisms. Modulates AKT/GSK3B pathway by decreasing AKT and GSK3B phosphorylation. Negatively regulates STAT3 signaling pathway through inhibition of STAT3 phosphorylation and translocation to the nucleus. Functionally important modulator of cardiac myocyte size and of the cardiac response to stress. May play a role as negative regulator of axon regeneration after central nervous system injuries. The chain is Phosphatidylinositide phosphatase SAC2 from Homo sapiens (Human).